Consider the following 98-residue polypeptide: Ribonuclease kappa (98 aa).

2 helical membrane passes run 13-33 (ACGIVLSAWGVIMLIMLGIFF) and 65-85 (VSYNCFIAASLYLLLGGFSFC).

The protein belongs to the RNase K family. Interacts with the proton translocation complex V0 of the V-ATPase. Interacts with ATP6AP1. Expressed in brain (at protein level).

It localises to the endomembrane system. The protein localises to the cytoplasmic vesicle. Its subcellular location is the clathrin-coated vesicle membrane. Its function is as follows. Endoribonuclease which preferentially cleaves ApU and ApG phosphodiester bonds. Hydrolyzes UpU bonds at a lower rate. Regulates the activity of vacuolar (H+)-ATPase (V-ATPase) which is responsible for acidifying and maintaining the pH of intracellular compartments. Required at an early stage of receptor-mediated endocytosis. The sequence is that of Ribonuclease kappa (RNASEK) from Bos taurus (Bovine).